Consider the following 288-residue polypeptide: Bifunctional protein FolD (288 aa).

NADP(+)-binding positions include 166-168 (GRS), Ser-191, and Val-232.

This sequence belongs to the tetrahydrofolate dehydrogenase/cyclohydrolase family. Homodimer.

The enzyme catalyses (6R)-5,10-methylene-5,6,7,8-tetrahydrofolate + NADP(+) = (6R)-5,10-methenyltetrahydrofolate + NADPH. It carries out the reaction (6R)-5,10-methenyltetrahydrofolate + H2O = (6R)-10-formyltetrahydrofolate + H(+). It participates in one-carbon metabolism; tetrahydrofolate interconversion. Its function is as follows. Catalyzes the oxidation of 5,10-methylenetetrahydrofolate to 5,10-methenyltetrahydrofolate and then the hydrolysis of 5,10-methenyltetrahydrofolate to 10-formyltetrahydrofolate. This Roseiflexus sp. (strain RS-1) protein is Bifunctional protein FolD.